A 519-amino-acid chain; its full sequence is Cell adhesion molecule CEACAM1 (519 aa).

A signal peptide spans 1–34 (MELASARLLRGQIPWRGLLLTASLLTYWSPLTTA). Residue Gln35 is modified to Pyrrolidone carboxylic acid. The Extracellular segment spans residues 35 to 425 (QVTVDAVPPN…QGNSGLSEGA (391 aa)). The interval 39–142 (DAVPPNVVEE…QTSVQFRVYP (104 aa)) is required for homophilic binding. Residues 42–140 (PPNVVEEKSV…PIQTSVQFRV (99 aa)) form the Ig-like V-type domain. N-linked (GlcNAc...) asparagine glycosylation is found at Asn87, Asn104, Asn113, Asn148, Asn152, Asn173, Asn197, Asn224, Asn256, Asn288, Asn292, Asn302, Asn315, and Asn331. Ig-like C2-type domains are found at residues 147–232 (PNVT…FNLD), 237–317 (PDAP…KNIT), and 325–403 (PSIQ…FRIS). A disulfide bond links Cys167 and Cys215. An intrachain disulfide couples Cys259 to Cys299. Cys344 and Cys392 form a disulfide bridge. N-linked (GlcNAc...) asparagine; atypical glycosylation occurs at Asn374. A helical transmembrane segment spans residues 426 to 446 (IAGIVIGSVAGVALIAALAYF). An interaction with calmodulin region spans residues 445–457 (YFLYSRKTGGGSD). Residues 447-519 (LYSRKTGGGS…ETVYSVVKKK (73 aa)) lie on the Cytoplasmic side of the membrane. The interval 447-519 (LYSRKTGGGS…ETVYSVVKKK (73 aa)) is interaction with FLNA. The segment at 455-519 (GSDHRDLTEH…ETVYSVVKKK (65 aa)) is disordered. The span at 456–466 (SDHRDLTEHKP) shows a compositional bias: basic and acidic residues. A required for interaction with PTPN11 and PTPN6 and for control of phosphorylation level region spans residues 484 to 519 (DDVSYSVLNFNAQQSKRPTSASSSPTETVYSVVKKK). Tyr488 carries the post-translational modification Phosphotyrosine; by SRC, LCK, INSR and EGFR. A compositionally biased stretch (polar residues) spans 489 to 512 (SVLNFNAQQSKRPTSASSSPTETV). Ser503 carries the phosphoserine modification. Position 513 is a phosphotyrosine; by INSR, SRC and LCK (Tyr513). Residues 513 to 516 (YSVV) form an essential for interaction with PTPN11 and PTPN6 region.

This sequence belongs to the immunoglobulin superfamily. CEA family. Monomer. Oligomer. Heterodimer. Homodimer. Cis-dimer/oligomer (via Ig-like C2-type and/or via cytoplasmic domains); induced by trans-homophilic cell adhesion through an allosteric mechanism transmitted by the Ig-like V-type domain, and is regulated by intracellular calcium and calmodulin. Interacts (via cytoplasmic domain) with calmodulin in a calcium dependent manner; reduces homophilic cell adhesion through dissociation of dimer. Isoform 1 interacts (via cytoplasmic domain) with PTPN11 (preferentially) and PTPN6; cis-homodimer form is preferred; this interaction is decreased by formation of isoform 1 / isoform 2 cis-heterodimers and is dependent on the monomer/dimer equilibrium; this interaction is phosphorylation-dependent. Isoform 1 interacts with LYN. Isoform 1 interacts (via cytoplasmic domain) with SRC (via SH2 domain); this interaction is regulated by trans-homophilic cell adhesion. Isoform 1 interacts (via cytoplasmic domain) with LCK; mediates phosphorylation at Tyr-488 and Tyr-513 resulting in PTPN6 association. Isoform 1 interacts with PTPN6; this interaction is phosphorylation-dependent and causes a profound decrease in TCR stimulation-induced CD247 and ZAP70 phosphorylation. Isoform 1 interacts with TCR/CD3 complex through TCR beta chain and CD3E; colocalizes at the cell surface and upon stimulation of the TCR/CD3 complex recruits PTPN6 in the TCR/CD3 complex, resulting in dephosphorylation of CD247 and ZAP70. Isoform 1 interacts (via cytoplasmic domain) with SHC1 (via SH2 domain); SHC1 mediates interaction with INSR or EGFR in a Ser-503 phosphorylation-dependent manner. Isoform 1 interacts with EGFR; the interaction is indirect. Isoform 1 interacts with CSF3R; down-regulates the CSF3R-STAT3 pathway through recruitment of PTPN6 that dephosphorylates CSF3R. Isoform 1 (phosphorylated form) interacts with TLR4 and SYK; recruits PTPN6 that dephosphorylates SYK, reducing the production of reactive oxygen species (ROS) and lysosome disruption, leading to a reduction of the inflammasome activity. Isoform 1 interacts with FLNA; inhibits cell migration and cell scattering by interfering with the interaction of FLNA with RALA. Isoform 1 interacts (via cytoplasmic domain) with PXN; the interaction is phosphotyrosyl-dependent. Isoform 1 interacts with KLRK1; recruits PTPN6 that dephosphorylates VAV1. Isoform 1 interacts with CEACAM8. Isoform 1 interacts with FASN; this interaction is insulin and phosphorylation-dependent; reduces fatty-acid synthase activity. Interacts (via Ig-like V-type) with HAVCR2 (via Ig-like V-type); facilitates the maturation and cell surface expression of HAVCR2 thereby regulating T-cell tolerance induction. Isoform 2 interacts (via the cytoplasmic domain) with ANXA2; this interaction is regulated by phosphorylation and appears in the AIIt complex. Interacts (via Lewis X moieties) with CD209 (via C-type lectin domain); this interaction is regulated by the glycosylation pattern of CEACAM1 on cell types and regulates contact between dendritic cells and neutrophils. Phosphorylated on serine and tyrosine. Isoform 1 is phosphorylated on tyrosine by Src family kinases like SRC and LCK and by receptor like CSF3R, EGFR and INSR upon stimulation. Phosphorylated at Ser-503; mediates activity. Phosphorylated at Tyr-488; regulates activity. Phosphorylated at Tyr-488 by EGFR and INSR upon stimulation; this phosphorylation is Ser-503-phosphorylation-dependent; mediates cellular internalization; increases interaction with FASN. Phosphorylated at Tyr-488 and Tyr-513 by LCK; mediates PTPN6 association and is regulated by homophilic ligation of CEACAM1 in the absence of T-cell activation. Phosphorylated at Tyr-513; mediates interaction with PTPN11. In terms of processing, phosphorylated on serine and threonine. In terms of tissue distribution, expressed in epithelia, vessel endothelia, leukocytes and platelets. Isoform 1 and isoform 2 are highly expressed in liver and intestine, moderately in lung, and weakly in muscle, kidney, and spleen. Expressed in granulocytes, lymphocytes, granulocytes, B cells, and T-cells.

It is found in the cell membrane. Its subcellular location is the lateral cell membrane. The protein resides in the apical cell membrane. It localises to the basal cell membrane. The protein localises to the cell junction. It is found in the adherens junction. Its subcellular location is the cytoplasmic vesicle. The protein resides in the secretory vesicle. It localises to the cell projection. The protein localises to the microvillus membrane. Its function is as follows. Cell adhesion protein that mediates homophilic cell adhesion in a calcium-independent manner. Plays a role as coinhibitory receptor in immune response, insulin action and also functions as an activator during angiogenesis. Its coinhibitory receptor function is phosphorylation- and PTPN6 -dependent, which in turn, suppress signal transduction of associated receptors by dephosphorylation of their downstream effectors. Plays a role in immune response, of T-cells, natural killer (NK) and neutrophils. Upon TCR/CD3 complex stimulation, inhibits TCR-mediated cytotoxicity by blocking granule exocytosis by mediating homophilic binding to adjacent cells, allowing interaction with and phosphorylation by LCK and interaction with the TCR/CD3 complex which recruits PTPN6 resulting in dephosphorylation of CD247 and ZAP70. Also inhibits T-cell proliferation and cytokine production through inhibition of JNK cascade and plays a crucial role in regulating autoimmunity and anti-tumor immunity by inhibiting T-cell through its interaction with HAVCR2. Upon natural killer (NK) cells activation, inhibit KLRK1-mediated cytolysis of CEACAM1-bearing tumor cells by trans-homophilic interactions with CEACAM1 on the target cell and lead to cis-interaction between CEACAM1 and KLRK1, allowing PTPN6 recruitment and then VAV1 dephosphorylation. Upon neutrophils activation negatively regulates IL1B production by recruiting PTPN6 to a SYK-TLR4-CEACAM1 complex, that dephosphorylates SYK, reducing the production of reactive oxygen species (ROS) and lysosome disruption, which in turn, reduces the activity of the inflammasome. Down-regulates neutrophil production by acting as a coinhibitory receptor for CSF3R by downregulating the CSF3R-STAT3 pathway through recruitment of PTPN6 that dephosphorylates CSF3R. Also regulates insulin action by promoting INS clearance and regulating lipogenesis in liver through regulating insulin signaling. Upon INS stimulation, undergoes phosphorylation by INSR leading to INS clearance by increasing receptor-mediated insulin endocytosis. This inernalization promotes interaction with FASN leading to receptor-mediated insulin degradation and to reduction of FASN activity leading to negative regulation of fatty acid synthesis. INSR-mediated phosphorylation also provokes a down-regulation of cell proliferation through SHC1 interaction resulting in decrease coupling of SHC1 to the MAPK3/ERK1-MAPK1/ERK2 and phosphatidylinositol 3-kinase pathways. Functions as activator in angiogenesis by promoting blood vessel remodeling through endothelial cell differentiation and migration and in arteriogenesis by increasing the number of collateral arteries and collateral vessel calibers after ischemia. Also regulates vascular permeability through the VEGFR2 signaling pathway resulting in control of nitric oxide production. Down-regulates cell growth in response to EGF through its interaction with SHC1 that mediates interaction with EGFR resulting in decrease coupling of SHC1 to the MAPK3/ERK1-MAPK1/ERK2 pathway. Negatively regulates platelet aggregation by decreasing platelet adhesion on type I collagen through the GPVI-FcRgamma complex. Inhibits cell migration and cell scattering through interaction with FLNA; interferes with the interaction of FLNA with RALA. Mediates bile acid transport activity in a phosphorylation dependent manner. Negatively regulates osteoclastogenesis. In terms of biological role, cell adhesion proteins that mediates homophilic cell adhesion in a calcium-independent manner. Promotes populations of T-cells regulating IgA production and secretion associated with control of the commensal microbiota and resistance to enteropathogens. The chain is Cell adhesion molecule CEACAM1 from Rattus norvegicus (Rat).